The chain runs to 548 residues: Chaperonin GroEL 2 (548 aa).

ATP-binding positions include Thr-30–Pro-33, Lys-51, Asp-87–Thr-91, Gly-415, and Asp-496. The disordered stretch occupies residues Lys-529 to Phe-548. Over residues Gly-538–Phe-548 the composition is skewed to gly residues.

Belongs to the chaperonin (HSP60) family. As to quaternary structure, forms a cylinder of 14 subunits composed of two heptameric rings stacked back-to-back. Interacts with the co-chaperonin GroES.

It localises to the cytoplasm. It carries out the reaction ATP + H2O + a folded polypeptide = ADP + phosphate + an unfolded polypeptide.. Together with its co-chaperonin GroES, plays an essential role in assisting protein folding. The GroEL-GroES system forms a nano-cage that allows encapsulation of the non-native substrate proteins and provides a physical environment optimized to promote and accelerate protein folding. In Rhodospirillum rubrum (strain ATCC 11170 / ATH 1.1.1 / DSM 467 / LMG 4362 / NCIMB 8255 / S1), this protein is Chaperonin GroEL 2.